We begin with the raw amino-acid sequence, 695 residues long: UvrABC system protein B (695 aa).

Residues 31–414 enclose the Helicase ATP-binding domain; that stretch reads EGIESGLSFQ…EIQRSGQIAE (384 aa). ATP is bound at residue 44–51; the sequence is GVTGSGKT. The Beta-hairpin signature appears at 97–120; sequence YYDYYQPEAYVPSRDLFIEKDSSI. Residues 435–601 form the Helicase C-terminal domain; that stretch reads QVDDLMSEVS…GVNKRIKDLI (167 aa). The UVR domain occupies 632–667; sequence AKEIQRLEKSMLEAARNMEFEQAAQYRDEIKNLRSK.

It belongs to the UvrB family. In terms of assembly, forms a heterotetramer with UvrA during the search for lesions. Interacts with UvrC in an incision complex.

It is found in the cytoplasm. The UvrABC repair system catalyzes the recognition and processing of DNA lesions. A damage recognition complex composed of 2 UvrA and 2 UvrB subunits scans DNA for abnormalities. Upon binding of the UvrA(2)B(2) complex to a putative damaged site, the DNA wraps around one UvrB monomer. DNA wrap is dependent on ATP binding by UvrB and probably causes local melting of the DNA helix, facilitating insertion of UvrB beta-hairpin between the DNA strands. Then UvrB probes one DNA strand for the presence of a lesion. If a lesion is found the UvrA subunits dissociate and the UvrB-DNA preincision complex is formed. This complex is subsequently bound by UvrC and the second UvrB is released. If no lesion is found, the DNA wraps around the other UvrB subunit that will check the other stand for damage. In Nitrosomonas europaea (strain ATCC 19718 / CIP 103999 / KCTC 2705 / NBRC 14298), this protein is UvrABC system protein B.